The chain runs to 338 residues: Tetraacyldisaccharide 4'-kinase (338 aa).

51-58 (HLGGAGKT) provides a ligand contact to ATP.

This sequence belongs to the LpxK family.

It carries out the reaction a lipid A disaccharide + ATP = a lipid IVA + ADP + H(+). It participates in glycolipid biosynthesis; lipid IV(A) biosynthesis; lipid IV(A) from (3R)-3-hydroxytetradecanoyl-[acyl-carrier-protein] and UDP-N-acetyl-alpha-D-glucosamine: step 6/6. In terms of biological role, transfers the gamma-phosphate of ATP to the 4'-position of a tetraacyldisaccharide 1-phosphate intermediate (termed DS-1-P) to form tetraacyldisaccharide 1,4'-bis-phosphate (lipid IVA). The sequence is that of Tetraacyldisaccharide 4'-kinase from Rhodopseudomonas palustris (strain BisB5).